A 185-amino-acid polypeptide reads, in one-letter code: Ribosome-recycling factor (185 aa).

This sequence belongs to the RRF family.

It is found in the cytoplasm. In terms of biological role, responsible for the release of ribosomes from messenger RNA at the termination of protein biosynthesis. May increase the efficiency of translation by recycling ribosomes from one round of translation to another. The sequence is that of Ribosome-recycling factor from Roseiflexus castenholzii (strain DSM 13941 / HLO8).